The primary structure comprises 132 residues: Small ribosomal subunit protein uS8 (132 aa).

It belongs to the universal ribosomal protein uS8 family. Part of the 30S ribosomal subunit. Contacts proteins S5 and S12.

One of the primary rRNA binding proteins, it binds directly to 16S rRNA central domain where it helps coordinate assembly of the platform of the 30S subunit. In Clostridium botulinum (strain ATCC 19397 / Type A), this protein is Small ribosomal subunit protein uS8.